The sequence spans 222 residues: Histidine biosynthesis bifunctional protein HisIE (222 aa).

A phosphoribosyl-AMP cyclohydrolase region spans residues Met-1 to Ala-128. The segment at Cys-129–Asn-222 is phosphoribosyl-ATP pyrophosphohydrolase.

It in the N-terminal section; belongs to the PRA-CH family. This sequence in the C-terminal section; belongs to the PRA-PH family.

It localises to the cytoplasm. It carries out the reaction 1-(5-phospho-beta-D-ribosyl)-ATP + H2O = 1-(5-phospho-beta-D-ribosyl)-5'-AMP + diphosphate + H(+). The enzyme catalyses 1-(5-phospho-beta-D-ribosyl)-5'-AMP + H2O = 1-(5-phospho-beta-D-ribosyl)-5-[(5-phospho-beta-D-ribosylamino)methylideneamino]imidazole-4-carboxamide. Its pathway is amino-acid biosynthesis; L-histidine biosynthesis; L-histidine from 5-phospho-alpha-D-ribose 1-diphosphate: step 2/9. The protein operates within amino-acid biosynthesis; L-histidine biosynthesis; L-histidine from 5-phospho-alpha-D-ribose 1-diphosphate: step 3/9. The sequence is that of Histidine biosynthesis bifunctional protein HisIE from Prochlorococcus marinus (strain MIT 9313).